Consider the following 287-residue polypeptide: Mitochondrial glycine transporter A (287 aa).

3 Solcar repeats span residues 7–97 (HPAV…LKQR), 104–188 (PGPL…TKHL), and 198–282 (YAPV…LMAQ). Helical transmembrane passes span 13–38 (FMCG…TRLQ), 72–98 (GVSP…KQRY), 110–135 (VLLG…TRFE), 163–186 (GLMA…SQTK), 202–228 (ANFS…KTHI), and 257–275 (GAVP…AWTV).

Belongs to the mitochondrial carrier (TC 2.A.29) family. SLC25A38 subfamily. In terms of tissue distribution, at 24 hours post-fertilization, expressed predominantly in posterior blood island, posterior cardinal vein and circulating blood, as well as in somites, brain and retina. At 34 hours post-fertilization, becomes restricted to posterior blood island and circulating blood.

It is found in the mitochondrion inner membrane. The catalysed reaction is glycine(in) = glycine(out). In terms of biological role, mitochondrial glycine transporter that imports glycine into the mitochondrial matrix. Plays an important role in providing glycine for the first enzymatic step in heme biosynthesis, the condensation of glycine with succinyl-CoA to produce 5-aminolevulinate (ALA) in the mitochondrial matrix. Required during erythropoiesis. Its function is as follows. May play a role as pro-apoptotic protein that induces caspase-dependent apoptosis. The protein is Mitochondrial glycine transporter A (slc25a38a) of Danio rerio (Zebrafish).